Consider the following 181-residue polypeptide: MTEYEGPKTKFHALMQEQIHNEFTAAQQYVAIAVYFDSEDLPQLAKHFYSQAVEERNHAMMLVQHLLDRDLRVEIPGVDTVRNQFDRPREALALALDQERTVTDQVGRLTAVARDEGDFLGEQFMQWFLQEQIEEVALMATLVRVADRAGANLFELENFVAREVDVAPAASGAPHAAGGRL.

Positions 15–150 (MQEQIHNEFT…TLVRVADRAG (136 aa)) constitute a Ferritin-like diiron domain. Residues E22, E55, H58, E99, and Q132 each coordinate Fe cation.

It belongs to the ferritin family. Prokaryotic subfamily. Homooligomer of 24 subunits that are packed together to form an approximately spherical molecule with a central cavity, in which large amounts of iron can be stored.

It carries out the reaction 4 Fe(2+) + O2 + 4 H(+) = 4 Fe(3+) + 2 H2O. Functionally, iron-storage protein that displays ferroxidase activity, catalyzing the oxidation of Fe(2+) ions into Fe(3+) ions, that can then be deposited as a ferric-oxide mineral core within the central cavity of the protein complex. This chain is Ferritin BfrB (bfrB), found in Mycobacterium tuberculosis (strain ATCC 35801 / TMC 107 / Erdman).